The primary structure comprises 778 residues: Phosphoribosylformylglycinamidine synthase subunit PurL (778 aa).

Residue histidine 44 is part of the active site. ATP is bound by residues tyrosine 47 and lysine 86. A Mg(2+)-binding site is contributed by glutamate 88. Residues serine 89–histidine 92 and arginine 111 each bind substrate. The Proton acceptor role is filled by histidine 90. Residues aspartate 112 and aspartate 265 each coordinate Mg(2+). Glutamate 309 to glutamine 311 is a substrate binding site. The disordered stretch occupies residues threonine 455–lysine 474. Positions 518 and 555 each coordinate ATP. Asparagine 556 is a binding site for Mg(2+). Position 558 (serine 558) interacts with substrate.

The protein belongs to the FGAMS family. In terms of assembly, monomer. Part of the FGAM synthase complex composed of 1 PurL, 1 PurQ and 2 PurS subunits.

Its subcellular location is the cytoplasm. It carries out the reaction N(2)-formyl-N(1)-(5-phospho-beta-D-ribosyl)glycinamide + L-glutamine + ATP + H2O = 2-formamido-N(1)-(5-O-phospho-beta-D-ribosyl)acetamidine + L-glutamate + ADP + phosphate + H(+). It participates in purine metabolism; IMP biosynthesis via de novo pathway; 5-amino-1-(5-phospho-D-ribosyl)imidazole from N(2)-formyl-N(1)-(5-phospho-D-ribosyl)glycinamide: step 1/2. In terms of biological role, part of the phosphoribosylformylglycinamidine synthase complex involved in the purines biosynthetic pathway. Catalyzes the ATP-dependent conversion of formylglycinamide ribonucleotide (FGAR) and glutamine to yield formylglycinamidine ribonucleotide (FGAM) and glutamate. The FGAM synthase complex is composed of three subunits. PurQ produces an ammonia molecule by converting glutamine to glutamate. PurL transfers the ammonia molecule to FGAR to form FGAM in an ATP-dependent manner. PurS interacts with PurQ and PurL and is thought to assist in the transfer of the ammonia molecule from PurQ to PurL. This Symbiobacterium thermophilum (strain DSM 24528 / JCM 14929 / IAM 14863 / T) protein is Phosphoribosylformylglycinamidine synthase subunit PurL.